The sequence spans 135 residues: P2Y purinoceptor 4 (135 aa).

Residues 1–25 (VHFSSSVMVLLFGLPFLVTLVCYGL) traverse the membrane as a helical segment. The Cytoplasmic segment spans residues 26 to 49 (MALRLCRPLPGAGQSSSRLRSLRT). A helical transmembrane segment spans residues 50–72 (IAVVMTVFAVCLVPFHITRTIYY). The Extracellular segment spans residues 73 to 90 (LARLLKADCQILNIVNVV). The chain crosses the membrane as a helical span at residues 91-112 (YKVTRPLASANSCLDPLLYLFT). Over 113–135 (GDKYRHQLQRLCRVSAPQRRITA) the chain is Cytoplasmic.

Belongs to the G-protein coupled receptor 1 family. In terms of tissue distribution, expressed in brain, heart, stria vascularis and vestibular labyrinth.

It localises to the cell membrane. Receptor for ATP and UTP coupled to G-proteins that activate a phosphatidylinositol-calcium second messenger system. Not activated by UDP. The protein is P2Y purinoceptor 4 (P2RY4) of Meriones unguiculatus (Mongolian jird).